A 247-amino-acid chain; its full sequence is Sulfate transporter CysZ (247 aa).

5 helical membrane-spanning segments follow: residues 29–49 (FVVL…FYLF), 66–86 (FLSW…LATF), 141–160 (LLYI…IPAL), 164–186 (VGPV…DYPF), and 212–232 (VLVS…PVAI).

The protein belongs to the CysZ family.

The protein localises to the cell inner membrane. In terms of biological role, high affinity, high specificity proton-dependent sulfate transporter, which mediates sulfate uptake. Provides the sulfur source for the cysteine synthesis pathway. The protein is Sulfate transporter CysZ of Vibrio parahaemolyticus serotype O3:K6 (strain RIMD 2210633).